Reading from the N-terminus, the 594-residue chain is Elongation factor 4 (594 aa).

Positions 2–184 (KNIRNFSIIA…TIVAKVPAPE (183 aa)) constitute a tr-type G domain. Residues 14 to 19 (DHGKST) and 131 to 134 (NKID) contribute to the GTP site.

It belongs to the TRAFAC class translation factor GTPase superfamily. Classic translation factor GTPase family. LepA subfamily.

It localises to the cell inner membrane. It catalyses the reaction GTP + H2O = GDP + phosphate + H(+). Required for accurate and efficient protein synthesis under certain stress conditions. May act as a fidelity factor of the translation reaction, by catalyzing a one-codon backward translocation of tRNAs on improperly translocated ribosomes. Back-translocation proceeds from a post-translocation (POST) complex to a pre-translocation (PRE) complex, thus giving elongation factor G a second chance to translocate the tRNAs correctly. Binds to ribosomes in a GTP-dependent manner. This chain is Elongation factor 4, found in Francisella tularensis subsp. holarctica (strain FTNF002-00 / FTA).